The following is a 567-amino-acid chain: Ran-binding protein 3 (567 aa).

Over residues 1–10 (MADLANEEKP) the composition is skewed to basic and acidic residues. Disordered regions lie at residues 1-263 (MADL…FVFG), 332-373 (LSPP…AESA), and 515-567 (VEQE…TGST). Ala-2 carries the N-acetylalanine modification. 2 positions are modified to N6-acetyllysine: Lys-9 and Lys-21. Residues 39-49 (EEPRGEAEAPH) are compositionally biased toward basic and acidic residues. Thr-75 is subject to Phosphothreonine. Positions 75-89 (TPPPPAPEAQLPPFP) are enriched in pro residues. Phosphoserine occurs at positions 100, 101, and 108. The short motif at 117-125 (PPVKRERTS) is the Nuclear localization signal element. The residue at position 124 (Thr-124) is a Phosphothreonine. 2 stretches are compositionally biased toward polar residues: residues 125-134 (SSLTQFPPSQ) and 184-197 (ALSQTVPSSGTNGV). Ser-126 is modified (phosphoserine). 5 positions are modified to phosphoserine: Ser-219, Ser-333, Ser-353, Ser-355, and Ser-372. Over residues 347-362 (ENAAAESGSESSSQEA) the composition is skewed to low complexity. Residues 378 to 518 (KATARKCLLE…LALRSRVEQE (141 aa)) enclose the RanBD1 domain. The span at 534 to 544 (NEEDDSDDDDV) shows a compositional bias: acidic residues. Residue Ser-539 is modified to Phosphoserine. Over residues 549–567 (GATAAGAGDEGDGQTTGST) the composition is skewed to low complexity.

Interacts with CHC1 in a Ran-stimulated manner. Interacts with XPO1. Interacts (via its C-terminal R domain) with SMAD2 (dephosphorylated form via its MH1 and MH2 domains); the interaction results in the nuclear export of SMAD2 and termination of the TGF-beta signaling. Interacts (via its C-terminal R domain) with SMAD3 (dephosphorylated form via its MH1 domain); the interaction results in the nuclear export of SMAD3 and termination of the TGF-beta signaling. Phosphorylation at Ser-126 promotes its import into the nucleus. Widely expressed with high levels in testis and heart.

It localises to the cytoplasm. The protein resides in the nucleus. Acts as a cofactor for XPO1/CRM1-mediated nuclear export, perhaps as export complex scaffolding protein. Bound to XPO1/CRM1, stabilizes the XPO1/CRM1-cargo interaction. In the absence of Ran-bound GTP prevents binding of XPO1/CRM1 to the nuclear pore complex. Binds to CHC1/RCC1 and increases the guanine nucleotide exchange activity of CHC1/RCC1. Recruits XPO1/CRM1 to CHC1/RCC1 in a Ran-dependent manner. Negative regulator of TGF-beta signaling through interaction with the R-SMAD proteins, SMAD2 and SMAD3, and mediating their nuclear export. The protein is Ran-binding protein 3 (RANBP3) of Homo sapiens (Human).